A 328-amino-acid chain; its full sequence is Transcription initiation factor IIE subunit beta (328 aa).

The interval 32–105 (QKKTNDTVIT…SSPSKKVRPG (74 aa)) is disordered. S52 carries the phosphoserine modification. Over residues 85 to 94 (LDDDDDDEDF) the composition is skewed to acidic residues. A phosphoserine mark is found at S97 and S106. Positions 113–187 (QANQTDISKS…FKYLSTYDVH (75 aa)) form a DNA-binding region, TFIIE beta.

It belongs to the TFIIE beta subunit family. TFIIE is a tetramer of two alpha (TFA1) and two beta (TFA2) subunits.

It is found in the nucleus. In terms of biological role, recruits TFIIH to the initiation complex and stimulates the RNA polymerase II C-terminal domain kinase and DNA-dependent ATPase activities of TFIIH. Both TFIIH and TFIIE are required for promoter clearance by RNA polymerase. The sequence is that of Transcription initiation factor IIE subunit beta (TFA2) from Saccharomyces cerevisiae (strain ATCC 204508 / S288c) (Baker's yeast).